The sequence spans 504 residues: Terminase, large subunit (504 aa).

Positions 1 to 204 are ATPase activity; that stretch reads MTRGERVIAF…LSIWIDDAVK (204 aa). Residues 54–61 carry the Walker A motif motif; that stretch reads IARKNGKT. The Walker B motif motif lies at 149–154; that stretch reads LAILDE. Positions 326-415 are nuclease activity; sequence FPFFWTPQKT…LPLVEFGQGF (90 aa). Residue Asp471 coordinates Mg(2+).

The protein belongs to the Hendrixvirinae large terminase family. In terms of assembly, homopentamer; forms a ring-like structure through which genomic DNA is translocated into the capsid. Interacts with the terminase small subunit; the active complex is composed of a pentamer ring of terminase large subunits and a nonamer ring of terminase small subunits. Interacts with the portal protein; this interaction allows the packaging of viral DNA. Mg(2+) is required as a cofactor. Mn(2+) serves as cofactor.

With respect to regulation, inhibited by zinc. The terminase large subunit acts as an ATP driven molecular motor necessary for viral DNA translocation into empty capsids and as an endonuclease that cuts the viral genome from the concetamer to initiate and to end a packaging reaction. The terminase lies at a unique vertex of the procapsid and is composed of two subunits, a small terminase subunit involved in viral DNA recognition (packaging sequence), and a large terminase subunit possessing endonucleolytic and ATPase activities. Both terminase subunits heterooligomerize and are docked on the portal protein to form the packaging machine. Packaging initiates by TerS recognizing the packaging sequence in the viral DNA. The nuclease activity of TerL cuts the viral DNA and the terminase-DNA complex binds to the portal of a procapsid shell. DNA is translocated into the capsid, powered by the packaging ATPase in TerL, which continues until the next site is encountered at which point the motor stops and again cuts the DNA to release the nucleocapsid filled with a unit-length genome ('unit length' packaging). The chain is Terminase, large subunit (2) from Escherichia coli (Bacteriophage HK97).